Here is a 237-residue protein sequence, read N- to C-terminus: ATP-dependent dethiobiotin synthetase BioD (237 aa).

12–17 (DAGKTL) lines the ATP pocket. Position 16 (Thr-16) interacts with Mg(2+). The active site involves Lys-37. Ser-41 is a substrate binding site. ATP contacts are provided by residues Asp-54, 116-119 (EGAG), and 213-215 (PRL). Positions 54 and 116 each coordinate Mg(2+).

The protein belongs to the dethiobiotin synthetase family. Homodimer. Mg(2+) is required as a cofactor.

It is found in the cytoplasm. It catalyses the reaction (7R,8S)-7,8-diammoniononanoate + CO2 + ATP = (4R,5S)-dethiobiotin + ADP + phosphate + 3 H(+). It participates in cofactor biosynthesis; biotin biosynthesis; biotin from 7,8-diaminononanoate: step 1/2. Catalyzes a mechanistically unusual reaction, the ATP-dependent insertion of CO2 between the N7 and N8 nitrogen atoms of 7,8-diaminopelargonic acid (DAPA, also called 7,8-diammoniononanoate) to form a ureido ring. This is ATP-dependent dethiobiotin synthetase BioD from Chromohalobacter salexigens (strain ATCC BAA-138 / DSM 3043 / CIP 106854 / NCIMB 13768 / 1H11).